We begin with the raw amino-acid sequence, 1155 residues long: MIKRVHLGQGRADEILDLPNLIEIQLNSYEKFLQLDKLKNKKPLLNEGLESVFRNIFPIKSGNGDVALEYERYYIENDALNFTEKECKRKGQSYEAVLKVRLNLQFLTTGEIRQKDVYMGTIPLMTERGTFIINGAERVVVSQIHRSPGVVFYKEKDLYSARIIPYRGSWLEFEIDSKKDYLYVKIDRKKRILITLFLRALGFDTREKIIETFYNIKKIKVEDSTKRDLPGQYLAKSINIRENMYYRAGDKITLQDVEDFLQNGVNEIELVDFDGYDAISGKCFVSSNVILNCLEKEDAFFALKDGSKELPKESVMLAVYGALFPGEPISIDNAENDLKTIFFSERRYDLGRVGRYKLSKKFGFDDLSTSVLTMYDIVNTISHLLRIYEGHDILDDIDHLGNRRVRSVGELLTNIYKGAMSRVEKIAKDRMSNKEVFNLKPQELISVKPIVSAVKEFFATSQLSQFMDQVNPLAELTHKRRLNALGPGGLSRDRAGFEVRDVHYTHYGRMCPIETPEGPNIGLIVSLATYSRVNDYGFLETPYRKVVNGEVTDELEYLSAIDEEKKCIAQANAAFNSNGKYLEDLVSVRISGDYTTTNPKNIDYMDVSPRQLISVSSALIPFLEHNDANRALMGSNMQRQAVPLLFPKPPIVGTGMESVVAKDSGVVVKAKRSGEVILATSSKIVVKPFESENAKDLDEYHIVKYERTNQDTCFNQSVLVKEGQKVESGEIIADGPATRYGELALGNNLLLGVIPWNGFNYEDAILISDRIVKEDLYTSIHIKEFSIEVRETKLGPEKVTGDIPNVSEKILNKLDENGIIRIGTYVKPGDILVGKVTPKSEGDITPEFRLLTSIFGEKAKDVKNNSLKVPHGTEGTVIDVQRITKEDVGNLSPGVEEILKVYVAKKRKLKEGDKMAGRHGNKGVVAKILPVEDMPYLADGTPLDICLNPLGVPSRMNIGQLMESQLGLAGKYLGESYNVPVFESATNEQIQEKLKKAGFNPTSKEILYDGYTGEPFENEVMVGVIYMLKLHHLVDDKMHARSTGPYSLVSQQPLGGKAQFGGQRLGEMEVWALEAYGAAHTLQELLTVKSDDMSGRVKIYENIVKGVPTNVSGIPESFNVLMQELRGLGLDLSIYDDNGNQVPLTEKEEELINKG.

It belongs to the RNA polymerase beta chain family. In terms of assembly, the RNAP catalytic core consists of 2 alpha, 1 beta, 1 beta' and 1 omega subunit. When a sigma factor is associated with the core the holoenzyme is formed, which can initiate transcription.

The catalysed reaction is RNA(n) + a ribonucleoside 5'-triphosphate = RNA(n+1) + diphosphate. DNA-dependent RNA polymerase catalyzes the transcription of DNA into RNA using the four ribonucleoside triphosphates as substrates. The polypeptide is DNA-directed RNA polymerase subunit beta (Borrelia garinii subsp. bavariensis (strain ATCC BAA-2496 / DSM 23469 / PBi) (Borreliella bavariensis)).